Consider the following 545-residue polypeptide: Membrane protein insertase YidC (545 aa).

The chain crosses the membrane as a helical span at residues 6 to 26 (NLLLIALLFVSFMIWQAWQTD). Positions 31-54 (PVAQTTQQTSNPATGDAASSAVPA) are disordered. 4 helical membrane passes run 342-362 (KFIH…TFIV), 417-437 (LGGC…YYML), 455-475 (LSAQ…MFFI), and 496-516 (PVIF…YYIV).

The protein belongs to the OXA1/ALB3/YidC family. Type 1 subfamily. Interacts with the Sec translocase complex via SecD. Specifically interacts with transmembrane segments of nascent integral membrane proteins during membrane integration.

Its subcellular location is the cell inner membrane. Required for the insertion and/or proper folding and/or complex formation of integral membrane proteins into the membrane. Involved in integration of membrane proteins that insert both dependently and independently of the Sec translocase complex, as well as at least some lipoproteins. Aids folding of multispanning membrane proteins. This Serratia proteamaculans (strain 568) protein is Membrane protein insertase YidC.